The sequence spans 759 residues: Putative ATP-dependent DNA helicase YjcD (759 aa).

The interval 68 to 121 is disordered; it reads ACEPKPSKEGKKEDDQESGVIRLPKGKAIAADPSPAVTEWHRPRSIKPGTPFVP. A compositionally biased stretch (basic and acidic residues) spans 69–81; that stretch reads CEPKPSKEGKKED. The 280-residue stretch at 134–413 folds into the UvrD-like helicase ATP-binding domain; that stretch reads VGLNTDQLKA…IYLTANYRST (280 aa). Residues 158-163 and Arg411 contribute to the ATP site; that span reads GSGKTR. The UvrD-like helicase C-terminal domain occupies 414–676; the sequence is HPIVSSADIV…QLMTIHRSKG (263 aa).

This sequence belongs to the helicase family. UvrD subfamily.

The protein localises to the cytoplasm. It carries out the reaction Couples ATP hydrolysis with the unwinding of duplex DNA by translocating in the 3'-5' direction.. The catalysed reaction is ATP + H2O = ADP + phosphate + H(+). Functionally, may be involved in the generation of recombinogenic substrates for the subsequent action of RecA. In Bacillus subtilis (strain 168), this protein is Putative ATP-dependent DNA helicase YjcD (yjcD).